Reading from the N-terminus, the 262-residue chain is Acyl-[acyl-carrier-protein]--UDP-N-acetylglucosamine O-acyltransferase (262 aa).

Belongs to the transferase hexapeptide repeat family. LpxA subfamily. Homotrimer.

The protein resides in the cytoplasm. It catalyses the reaction a (3R)-hydroxyacyl-[ACP] + UDP-N-acetyl-alpha-D-glucosamine = a UDP-3-O-[(3R)-3-hydroxyacyl]-N-acetyl-alpha-D-glucosamine + holo-[ACP]. It functions in the pathway glycolipid biosynthesis; lipid IV(A) biosynthesis; lipid IV(A) from (3R)-3-hydroxytetradecanoyl-[acyl-carrier-protein] and UDP-N-acetyl-alpha-D-glucosamine: step 1/6. Involved in the biosynthesis of lipid A, a phosphorylated glycolipid that anchors the lipopolysaccharide to the outer membrane of the cell. This is Acyl-[acyl-carrier-protein]--UDP-N-acetylglucosamine O-acyltransferase from Verminephrobacter eiseniae (strain EF01-2).